A 217-amino-acid polypeptide reads, in one-letter code: Vacuolar protein-sorting-associated protein 37 homolog 1 (217 aa).

Residues 1-49 (MFNFWGSKDQQQGQSRPQEASSQSPWYSPSLVSSPSSSRPQSSGQISAQ) are disordered. A compositionally biased stretch (polar residues) spans 8-20 (KDQQQGQSRPQEA). The segment covering 21–47 (SSQSPWYSPSLVSSPSSSRPQSSGQIS) has biased composition (low complexity). The VPS37 C-terminal domain occupies 137-217 (QEKLNELERQ…IHLAAKTSNI (81 aa)).

The protein belongs to the VPS37 family. Component of the endosomal sorting required for transport complex I (ESCRT-I), composed of ELC, VPS28 and VPS37. Interacts with ELC.

The protein resides in the endosome. Functionally, component of the ESCRT-I complex (endosomal sorting complex required for transport I), a regulator of vesicular trafficking process. Required for the sorting of endocytic ubiquitinated cargos into multivesicular bodies (MVBs). The chain is Vacuolar protein-sorting-associated protein 37 homolog 1 (VPS37-1) from Arabidopsis thaliana (Mouse-ear cress).